The sequence spans 578 residues: uncharacterized protein (578 aa).

This is an uncharacterized protein from Ostreid herpesvirus 1 (isolate France) (OsHV-1).